The chain runs to 238 residues: Cysteine-rich venom protein pseudechetoxin-like (238 aa).

The first 19 residues, 1–19 (MIAFIVLLSLAAVLQQSSG), serve as a signal peptide directing secretion. A propeptide spanning residues 20–28 (TVDFASESS) is cleaved from the precursor. The SCP domain maps to 38-164 (VDKHNDLRRS…STKYLYVCQY (127 aa)). Intrachain disulfides connect C75–C153, C92–C165, C148–C162, C184–C191, C187–C196, C200–C233, C209–C227, and C218–C231. A ShKT domain is found at 200–233 (CKHNDDLSNCKPLAKKSKCQTEWIKSKCPATCFC).

The protein belongs to the CRISP family. In terms of tissue distribution, expressed by the venom gland.

The protein localises to the secreted. Its function is as follows. Blocks olfactory (CNGA2) and retinal (CNGA1) CNG channel currents. Does not affect neither depolarization- nor caffeine-induced contraction of smooth muscle. In Oxyuranus microlepidotus (Inland taipan), this protein is Cysteine-rich venom protein pseudechetoxin-like.